The following is a 571-amino-acid chain: Septation ring formation regulator EzrA (571 aa).

Residues 1–3 (MYY) lie on the Extracellular side of the membrane. A helical membrane pass occupies residues 4–22 (MLIGFIIVVIAVIGAGYIL). Over 23–571 (KRKHYQRINE…ESKVSVDDIE (549 aa)) the chain is Cytoplasmic. Coiled coils occupy residues 248 to 298 (LAQM…DTLE), 326 to 374 (DALA…ASGE), 400 to 437 (KFAEELRSLRKDELEARDDAERMRRAIITLDRKMERER), and 478 to 529 (RIAE…ENHF).

Belongs to the EzrA family.

It is found in the cell membrane. Its function is as follows. Negative regulator of FtsZ ring formation; modulates the frequency and position of FtsZ ring formation. Inhibits FtsZ ring formation at polar sites. Interacts either with FtsZ or with one of its binding partners to promote depolymerization. The polypeptide is Septation ring formation regulator EzrA (Listeria monocytogenes serovar 1/2a (strain ATCC BAA-679 / EGD-e)).